The chain runs to 466 residues: Cysteine--tRNA ligase (466 aa).

Cys27 contacts Zn(2+). The 'HIGH' region motif lies at 29 to 39; it reads PTVYNFFHIGN. 3 residues coordinate Zn(2+): Cys207, His232, and Glu236. The 'KMSKS' region motif lies at 264–268; sequence KMSKS. Lys267 provides a ligand contact to ATP.

Belongs to the class-I aminoacyl-tRNA synthetase family. As to quaternary structure, monomer. The cofactor is Zn(2+).

The protein resides in the cytoplasm. It catalyses the reaction tRNA(Cys) + L-cysteine + ATP = L-cysteinyl-tRNA(Cys) + AMP + diphosphate. This chain is Cysteine--tRNA ligase, found in Clostridium beijerinckii (strain ATCC 51743 / NCIMB 8052) (Clostridium acetobutylicum).